Reading from the N-terminus, the 341-residue chain is MANLDTQFQEFYGELQITVTKKQALITSHNNLRTKIQKYFAKNHPEYVPSFYIQGSYKMGTTIRTRDDECDLDDGCYFIPKPEVKGITLQNWVMDAVNGTVGATPVHKNKCIRVNYAAGYHIDLPVYRKERCNDNTEHPELAVRDGEYELSDPREIVQWFNSKKKDNPVLIRLVSYLKSWCDTVRGFMPPGLAMTILASKYQKKHEGRDDIALRDTLKSIRTALQANFSCVVPGTPYDDLFESYDSNRQEKFMSELNGFIEDADRAVNEKNKLKASKLWKKHLGNRFHLAPDENDAEMSKLDKLRDIGNKVLTGIATTAHNGYIHAAEGVKNVSHRNYGNE.

An ATP-binding site is contributed by Ser-56. Catalysis depends on residues Asp-71 and Asp-73. Asp-73 provides a ligand contact to Mg(2+). Position 109 (Asn-109) interacts with ATP. The active site involves Asp-123. Asp-123 lines the Mg(2+) pocket. ATP-binding residues include Leu-192 and Asp-238.

The protein belongs to the CD-NTase family. B04 subfamily. As to quaternary structure, monomer. The cofactor is Mg(2+).

The enzyme catalyses GTP + ATP = 3',3'-cGAMP + 2 diphosphate. In terms of biological role, cyclic nucleotide synthase (second messenger synthase) of a CBASS antivirus system. CBASS (cyclic oligonucleotide-based antiphage signaling system) provides immunity against bacteriophage. The CD-NTase protein synthesizes cyclic nucleotides in response to infection; these serve as specific second messenger signals. The signals activate a diverse range of effectors, leading to bacterial cell death and thus abortive phage infection. A type II-A(GA) CBASS system. Its function is as follows. Catalyzes the synthesis of 3'3'-cyclic GMP-AMP (3'3'-cGAMP) from GTP and ATP, a second messenger in cell signal transduction. May make another product. Controls the activity of the CBASS cGAMP-activated phospholipase effector protein. This Bacteroides fragilis protein is Cyclic GMP-AMP synthase.